The primary structure comprises 50 residues: Large ribosomal subunit protein bL33B (50 aa).

It belongs to the bacterial ribosomal protein bL33 family.

The sequence is that of Large ribosomal subunit protein bL33B from Streptococcus pneumoniae (strain ATCC BAA-255 / R6).